The sequence spans 403 residues: Prostaglandin E2 receptor EP1 subtype (403 aa).

The Extracellular segment spans residues 1-38; sequence MSLCGPLNLSLAGEATPCAEPGAPNASAWPPSGRASAS. Asn-8 and Asn-25 each carry an N-linked (GlcNAc...) asparagine glycan. A helical transmembrane segment spans residues 39–65; sequence PALPIFSMTLGAVSNVLALALLAQAAG. Residues 66-75 are Cytoplasmic-facing; that stretch reads RLRRRRSAAT. Residues 76-99 traverse the membrane as a helical segment; it reads FLLFVASLLATDLAGHVIPGALVL. The Extracellular portion of the chain corresponds to 100-114; that stretch reads RLYAAGRSPAGGACH. Cys-113 and Cys-191 are disulfide-bonded. Residues 115–136 form a helical membrane-spanning segment; the sequence is FLGGCMVFFGLCPLLLGCGMAV. At 137-158 the chain is on the cytoplasmic side; it reads ERCVGVTRPLLHAARVSAARAR. A helical transmembrane segment spans residues 159–180; the sequence is LALAVLAALALAVALLPLARVG. Residues 181–204 lie on the Extracellular side of the membrane; the sequence is RYELQYPGTWCFIGLRPAGGWRQA. Residues 205–230 traverse the membrane as a helical segment; the sequence is LLAGLFAGLGLAALLAALVCNTLSGL. Over 231-295 the chain is Cytoplasmic; that stretch reads ALLRARWRRR…ARRARAHDVE (65 aa). The tract at residues 243 to 287 is disordered; that stretch reads RRRPQACGPDGRRHWGARAPRSASASSSSSVASVPGGSPGRGSAR. Over residues 259 to 278 the composition is skewed to low complexity; the sequence is ARAPRSASASSSSSVASVPG. A helical membrane pass occupies residues 296–322; the sequence is MVGQLVGIMVVSCICWSPLLVLVVLAV. Topologically, residues 323–333 are extracellular; it reads GGWGSSSLQRP. A helical membrane pass occupies residues 334–355; that stretch reads LFLAVRLASWNQILDPWVYILL. The Cytoplasmic portion of the chain corresponds to 356–403; the sequence is RQAVLRQLLRLLPPRPGAKGSPAGLALTRSAWEASSLRSSRHSSLSHL.

It belongs to the G-protein coupled receptor 1 family.

It localises to the cell membrane. Functionally, receptor for prostaglandin E2 (PGE2). The activity of this receptor is mediated by G(q) proteins which activate a phosphatidylinositol-calcium second messenger system. May play a role as an important modulator of renal function. Implicated the smooth muscle contractile response to PGE2 in various tissues. This chain is Prostaglandin E2 receptor EP1 subtype (PTGER1), found in Canis lupus familiaris (Dog).